Reading from the N-terminus, the 425-residue chain is Serine--tRNA ligase (425 aa).

Disordered stretches follow at residues 43–69 (QRSS…SDPK) and 108–134 (LPNL…WGKP). Residues 117 to 134 (PEGRDENDNQERHRWGKP) are compositionally biased toward basic and acidic residues. 233–235 (TAE) lines the L-serine pocket. 264 to 266 (RRE) provides a ligand contact to ATP. Residue glutamate 287 participates in L-serine binding. 351 to 354 (EISS) serves as a coordination point for ATP. Residue serine 385 participates in L-serine binding.

It belongs to the class-II aminoacyl-tRNA synthetase family. Type-1 seryl-tRNA synthetase subfamily. In terms of assembly, homodimer. The tRNA molecule binds across the dimer.

Its subcellular location is the cytoplasm. The enzyme catalyses tRNA(Ser) + L-serine + ATP = L-seryl-tRNA(Ser) + AMP + diphosphate + H(+). The catalysed reaction is tRNA(Sec) + L-serine + ATP = L-seryl-tRNA(Sec) + AMP + diphosphate + H(+). It functions in the pathway aminoacyl-tRNA biosynthesis; selenocysteinyl-tRNA(Sec) biosynthesis; L-seryl-tRNA(Sec) from L-serine and tRNA(Sec): step 1/1. Its function is as follows. Catalyzes the attachment of serine to tRNA(Ser). Is also able to aminoacylate tRNA(Sec) with serine, to form the misacylated tRNA L-seryl-tRNA(Sec), which will be further converted into selenocysteinyl-tRNA(Sec). The chain is Serine--tRNA ligase from Prochlorococcus marinus (strain MIT 9313).